The primary structure comprises 657 residues: Putative serine protease (657 aa).

The next 3 helical transmembrane spans lie at 4-24, 46-62, and 109-131; these read YLAT…LLMP, WLLT…PSGT, and LLSG…VLML. In terms of domain architecture, Peptidase S39 spans 239-434; the sequence is QPGSDFVECE…ETDRYARTME (196 aa). Residues His284, Asp318, and Ser386 each act as for protease activity in the active site. Residues 513–605 form a disordered region; the sequence is PLGGLPISNG…PPSTGSVPKS (93 aa). A compositionally biased stretch (basic residues) spans 548–559; that stretch reads HTRRRRRNKKKS. Over residues 560–569 the composition is skewed to basic and acidic residues; sequence KNSETGHGPE. The segment covering 571-589 has biased composition (low complexity); sequence QSQQQSRPSSPIPDDSAPV.

This sequence belongs to the peptidase S39B family.

The protein resides in the host membrane. In terms of biological role, putative serine protease. The polypeptide is Putative serine protease (Mushroom bacilliform virus (isolate Australia/AUS LF-1) (MBV)).